A 173-amino-acid polypeptide reads, in one-letter code: Mesencephalic astrocyte-derived neurotrophic factor homolog (173 aa).

A signal peptide spans 1–22 (MKTWYMVVVIGFLATLVQTSLA). Intrachain disulfides connect Cys-28/Cys-114, Cys-31/Cys-103, Cys-61/Cys-72, and Cys-148/Cys-151.

This sequence belongs to the ARMET family.

It localises to the secreted. Required during the maturation of the embryonic nervous system for maintenance of neuronal and cuticular connectivity. Essential for maintenance of dopaminergic neurons and dopamine levels. In Drosophila yakuba (Fruit fly), this protein is Mesencephalic astrocyte-derived neurotrophic factor homolog.